The sequence spans 345 residues: Delta(1)-pyrroline-2-carboxylate reductase (345 aa).

Ser47 serves as the catalytic Charge relay system. His48 serves as the catalytic Proton donor. Arg52 lines the substrate pocket. 121 to 125 lines the NADP(+) pocket; the sequence is HFSAL. Thr161 lines the substrate pocket. 179–181 lines the NADP(+) pocket; that stretch reads DFA. 187-188 contributes to the substrate binding site; the sequence is RG. Glu189 functions as the Charge relay system in the catalytic mechanism. NADP(+) contacts are provided by residues 230–231 and 305–311; these read HK and RLPSGRR.

Belongs to the LDH2/MDH2 oxidoreductase family. As to quaternary structure, homodimer.

It catalyses the reaction L-proline + NAD(+) = 1-pyrroline-2-carboxylate + NADH + H(+). The catalysed reaction is L-proline + NADP(+) = 1-pyrroline-2-carboxylate + NADPH + H(+). In terms of biological role, catalyzes the reduction of Delta(1)-pyrroline-2-carboxylate (Pyr2C) to L-proline, using NADPH as the electron donor. Is likely involved in a degradation pathway that converts trans-3-hydroxy-L-proline (t3LHyp) to L-proline, which would allow A.tumefaciens to grow on t3LHyp as a sole carbon source. The polypeptide is Delta(1)-pyrroline-2-carboxylate reductase (Agrobacterium fabrum (strain C58 / ATCC 33970) (Agrobacterium tumefaciens (strain C58))).